Consider the following 215-residue polypeptide: Large ribosomal subunit protein uL3 (215 aa).

Low complexity predominate over residues 131 to 144; that stretch reads SSSRASHGNSRSHN. Residues 131–150 are disordered; that stretch reads SSSRASHGNSRSHNVPGSIG. Q153 is subject to N5-methylglutamine.

This sequence belongs to the universal ribosomal protein uL3 family. Part of the 50S ribosomal subunit. Forms a cluster with proteins L14 and L19. In terms of processing, methylated by PrmB.

Functionally, one of the primary rRNA binding proteins, it binds directly near the 3'-end of the 23S rRNA, where it nucleates assembly of the 50S subunit. The polypeptide is Large ribosomal subunit protein uL3 (Nitrosomonas europaea (strain ATCC 19718 / CIP 103999 / KCTC 2705 / NBRC 14298)).